The following is a 553-amino-acid chain: Dihydroxy-acid dehydratase (553 aa).

Asp78 is a binding site for Mg(2+). Cys119 is a [2Fe-2S] cluster binding site. Residues Asp120 and Lys121 each contribute to the Mg(2+) site. N6-carboxylysine is present on Lys121. Cys191 is a [2Fe-2S] cluster binding site. Glu444 contacts Mg(2+). The Proton acceptor role is filled by Ser470.

The protein belongs to the IlvD/Edd family. Homodimer. [2Fe-2S] cluster serves as cofactor. Requires Mg(2+) as cofactor.

It carries out the reaction (2R)-2,3-dihydroxy-3-methylbutanoate = 3-methyl-2-oxobutanoate + H2O. The enzyme catalyses (2R,3R)-2,3-dihydroxy-3-methylpentanoate = (S)-3-methyl-2-oxopentanoate + H2O. The protein operates within amino-acid biosynthesis; L-isoleucine biosynthesis; L-isoleucine from 2-oxobutanoate: step 3/4. Its pathway is amino-acid biosynthesis; L-valine biosynthesis; L-valine from pyruvate: step 3/4. Functionally, functions in the biosynthesis of branched-chain amino acids. Catalyzes the dehydration of (2R,3R)-2,3-dihydroxy-3-methylpentanoate (2,3-dihydroxy-3-methylvalerate) into 2-oxo-3-methylpentanoate (2-oxo-3-methylvalerate) and of (2R)-2,3-dihydroxy-3-methylbutanoate (2,3-dihydroxyisovalerate) into 2-oxo-3-methylbutanoate (2-oxoisovalerate), the penultimate precursor to L-isoleucine and L-valine, respectively. The chain is Dihydroxy-acid dehydratase from Methanococcoides burtonii (strain DSM 6242 / NBRC 107633 / OCM 468 / ACE-M).